We begin with the raw amino-acid sequence, 310 residues long: 2-dehydropantoate 2-reductase (310 aa).

Residues 9–14 (GVGAIG) and Asn-100 each bind NADP(+). Asn-100 contributes to the substrate binding site. Lys-184 (proton donor) is an active-site residue. The substrate site is built by Asn-188, Asn-192, and Ser-259. An NADP(+)-binding site is contributed by Glu-270.

Belongs to the ketopantoate reductase family.

It is found in the cytoplasm. The catalysed reaction is (R)-pantoate + NADP(+) = 2-dehydropantoate + NADPH + H(+). It participates in cofactor biosynthesis; (R)-pantothenate biosynthesis; (R)-pantoate from 3-methyl-2-oxobutanoate: step 2/2. Functionally, catalyzes the NADPH-dependent reduction of ketopantoate into pantoic acid. The sequence is that of 2-dehydropantoate 2-reductase from Aquifex aeolicus (strain VF5).